The chain runs to 1388 residues: DNA-directed RNA polymerase subunit beta' (1388 aa).

Residues Cys-70, Cys-72, Cys-85, and Cys-88 each coordinate Zn(2+). Mg(2+) contacts are provided by Asp-461, Asp-463, and Asp-465. The Zn(2+) site is built by Cys-808, Cys-882, Cys-889, and Cys-892.

The protein belongs to the RNA polymerase beta' chain family. In terms of assembly, the RNAP catalytic core consists of 2 alpha, 1 beta, 1 beta' and 1 omega subunit. When a sigma factor is associated with the core the holoenzyme is formed, which can initiate transcription. Mg(2+) is required as a cofactor. Requires Zn(2+) as cofactor.

The enzyme catalyses RNA(n) + a ribonucleoside 5'-triphosphate = RNA(n+1) + diphosphate. Functionally, DNA-dependent RNA polymerase catalyzes the transcription of DNA into RNA using the four ribonucleoside triphosphates as substrates. The protein is DNA-directed RNA polymerase subunit beta' of Acidiphilium cryptum (strain JF-5).